We begin with the raw amino-acid sequence, 182 residues long: MKKKLLFLGPPGAGKGTQANLFCKKYGLIHLSTGDLLRDEVSSGSVLGIKAAEIMNKGELVSDELVLSIVEGRLANINEGWLLDGFPRNVNQANSLKNLLEKINQPLEGVILIKVADDYLIKRLVERGRQDDNEQVITNRLKIYREKTSPLIDLYKKQGILEEIEGNADIDVVFSCIEKSLG.

Residue 12-17 (GAGKGT) participates in ATP binding. An NMP region spans residues 32 to 61 (STGDLLRDEVSSGSVLGIKAAEIMNKGELV). AMP is bound by residues threonine 33, arginine 38, 59–61 (ELV), 85–88 (GFPR), and glutamine 92. The tract at residues 126-132 (ERGRQDD) is LID. Arginine 127 serves as a coordination point for ATP. Residues arginine 129 and arginine 140 each contribute to the AMP site. Alanine 168 provides a ligand contact to ATP.

This sequence belongs to the adenylate kinase family. In terms of assembly, monomer.

It localises to the cytoplasm. The catalysed reaction is AMP + ATP = 2 ADP. It participates in purine metabolism; AMP biosynthesis via salvage pathway; AMP from ADP: step 1/1. In terms of biological role, catalyzes the reversible transfer of the terminal phosphate group between ATP and AMP. Plays an important role in cellular energy homeostasis and in adenine nucleotide metabolism. The polypeptide is Adenylate kinase (Prochlorococcus marinus (strain NATL2A)).